The sequence spans 325 residues: Small ribosomal subunit protein uS2 (325 aa).

Over residues K212–A226 the composition is skewed to basic and acidic residues. Residues K212–W325 form a disordered region. Low complexity-rich tracts occupy residues Q234–D247 and P261–G289. Residues F290–T300 are compositionally biased toward polar residues.

Belongs to the universal ribosomal protein uS2 family. As to quaternary structure, component of the small ribosomal subunit. Mature ribosomes consist of a small (40S) and a large (60S) subunit. The 40S subunit contains about 33 different proteins and 1 molecule of RNA (18S). The 60S subunit contains about 49 different proteins and 3 molecules of RNA (28S, 5.8S and 5S). Interacts with ribosomal protein S21.

The protein resides in the cytoplasm. Functionally, required for the assembly and/or stability of the 40S ribosomal subunit. Required for the processing of the 20S rRNA-precursor to mature 18S rRNA in a late step of the maturation of 40S ribosomal subunits. The protein is Small ribosomal subunit protein uS2 of Suberites domuncula (Sponge).